A 241-amino-acid chain; its full sequence is Glucosamine-6-phosphate deaminase (241 aa).

The Proton acceptor; for enolization step role is filled by D67. The active-site For ring-opening step is N136. The active-site Proton acceptor; for ring-opening step is the H138. The active-site For ring-opening step is E143.

It belongs to the glucosamine/galactosamine-6-phosphate isomerase family. NagB subfamily.

It catalyses the reaction alpha-D-glucosamine 6-phosphate + H2O = beta-D-fructose 6-phosphate + NH4(+). Its pathway is amino-sugar metabolism; N-acetylneuraminate degradation; D-fructose 6-phosphate from N-acetylneuraminate: step 5/5. Its function is as follows. Catalyzes the reversible isomerization-deamination of glucosamine 6-phosphate (GlcN6P) to form fructose 6-phosphate (Fru6P) and ammonium ion. The chain is Glucosamine-6-phosphate deaminase from Halothermothrix orenii (strain H 168 / OCM 544 / DSM 9562).